A 278-amino-acid chain; its full sequence is Ras-related protein Rab-40B (278 aa).

GTP is bound by residues S23, G26, and K27. Residues 41 to 49 (SPYGHPAGI) are switch-I. Mg(2+) is bound at residue D69. GTP is bound by residues G72, N126, and R127. The segment at 72–88 (GQGRFCTIFRSYSRGAQ) is switch-II. The SOCS box domain maps to 175-228 (LLRHGMDRLWRPSKVLSLQDLCCRAVVSCTPVHLVDKLPLPIALRSHLKSFSMA). The tract at residues 242-278 (SLTTSSTHKRSSLRKVKLVRPPQSPPKNCTRNSCKIS) is disordered. The span at 248–259 (THKRSSLRKVKL) shows a compositional bias: basic residues. A compositionally biased stretch (polar residues) spans 267 to 278 (PKNCTRNSCKIS). The S-palmitoyl cysteine moiety is linked to residue C270. The S-geranylgeranyl cysteine moiety is linked to residue C275.

Belongs to the small GTPase superfamily. Rab family. Component of the cullin-5-RING E3 ubiquitin-protein ligase complex (ECS(RAB40B) complex) composed of CUL5, Elongin BC (ELOB and ELOC), RNF7/RBX2 and RAB40B; RAB40B interaction with ECS complex is GTP-independent. Binds (GTP-bound) LIMA1; interaction promotes LIMA1 subcellular localization in lamellipodia during cell migration. Interacts (GTP-bound) with TKS5/SH3PXD2A (via PX domain); interaction promotes invadopodia-mediated extracellular matrix degradation. Requires Mg(2+) as cofactor.

The protein localises to the cell membrane. The protein resides in the cytoplasm. It localises to the cytosol. Its subcellular location is the cell projection. It is found in the lamellipodium membrane. The protein localises to the ruffle. It carries out the reaction GTP + H2O = GDP + phosphate + H(+). It participates in protein modification; protein ubiquitination. With respect to regulation, regulated by guanine nucleotide exchange factors (GEFs) which promote the exchange of bound GDP for free GTP. Regulated by GTPase activating proteins (GAPs) which increase the GTP hydrolysis activity. Inhibited by GDP dissociation inhibitors (GDIs). RAB40B small GTPase acts as substrate-recognition components of the ECS(RAB40B) E3 ubiquitin ligase complex which mediates the ubiquitination of target proteins. The Rab40 subfamily belongs to the Rab family that are key regulators of intracellular membrane trafficking, from the formation of transport vesicles to their fusion with membranes. Rabs cycle between an inactive GDP-bound form and an active GTP-bound form that is able to recruit to membranes different sets of downstream effectors directly responsible for vesicle formation, movement, tethering and fusion. As part of the ECS(RAB40B) complex, GTP-bound RAB40B promotes LIMA1/EPLIN ubiquitination and degradation, thereby regulating leading-edge actin dynamics during cell migration. As part of the ECS(RAB40B) complex, GTP-bound RAB40B also ubiquitinates RAP2A GTPase which promotes its localization to lamellipodia and activation to drive cell migration. The ECS(RAB40B) complex does not mediate canonical ubiquitin-dependent degradation of RAP2. RAB40B also binds TKS5/SH3PXD2A effector independently from ECS complex to promote invadopodia-mediated extracellular matrix degradation. The chain is Ras-related protein Rab-40B from Homo sapiens (Human).